The primary structure comprises 198 residues: Recombination protein RecR (198 aa).

The segment at 58–73 (CSICGNYTDSDPCAIC) adopts a C4-type zinc-finger fold. The 95-residue stretch at 81-175 (SIICVIEQPK…KVTRIAHGVP (95 aa)) folds into the Toprim domain.

This sequence belongs to the RecR family.

Functionally, may play a role in DNA repair. It seems to be involved in an RecBC-independent recombinational process of DNA repair. It may act with RecF and RecO. The chain is Recombination protein RecR from Clostridium novyi (strain NT).